Consider the following 132-residue polypeptide: Small ribosomal subunit protein uS8 (132 aa).

The protein belongs to the universal ribosomal protein uS8 family. As to quaternary structure, part of the 30S ribosomal subunit. Contacts proteins S5 and S12.

In terms of biological role, one of the primary rRNA binding proteins, it binds directly to 16S rRNA central domain where it helps coordinate assembly of the platform of the 30S subunit. This Ligilactobacillus salivarius (strain UCC118) (Lactobacillus salivarius) protein is Small ribosomal subunit protein uS8.